Here is a 162-residue protein sequence, read N- to C-terminus: NADH-ubiquinone oxidoreductase subunit 8 (162 aa).

4Fe-4S ferredoxin-type domains are found at residues 54 to 83 (RRYQTGEERCIACKLCEAICPAQAITIESE) and 93 to 122 (TRYDIDMTKCIYCGFCQEACPVDAIVEGPN). [4Fe-4S] cluster-binding residues include cysteine 63, cysteine 66, cysteine 69, cysteine 73, cysteine 102, cysteine 105, cysteine 108, and cysteine 112.

It belongs to the complex I 23 kDa subunit family. Requires [4Fe-4S] cluster as cofactor.

It is found in the mitochondrion. It carries out the reaction a ubiquinone + NADH + 5 H(+)(in) = a ubiquinol + NAD(+) + 4 H(+)(out). In terms of biological role, core subunit of the mitochondrial membrane respiratory chain NADH dehydrogenase (Complex I) that is believed to belong to the minimal assembly required for catalysis. Complex I functions in the transfer of electrons from NADH to the respiratory chain. The immediate electron acceptor for the enzyme is believed to be ubiquinone. May donate electrons to ubiquinone. This chain is NADH-ubiquinone oxidoreductase subunit 8 (NAD8), found in Reclinomonas americana.